Here is a 150-residue protein sequence, read N- to C-terminus: UPF0178 protein PputW619_5044 (150 aa).

Belongs to the UPF0178 family.

The chain is UPF0178 protein PputW619_5044 from Pseudomonas putida (strain W619).